A 331-amino-acid chain; its full sequence is tRNA N6-adenosine threonylcarbamoyltransferase (331 aa).

Fe cation is bound by residues His-108 and His-112. Substrate contacts are provided by residues 129 to 133 (LVSGG), Asp-161, Glu-178, and Ser-258. Position 286 (Asp-286) interacts with Fe cation.

It belongs to the KAE1 / TsaD family. It depends on Fe(2+) as a cofactor.

The protein localises to the cytoplasm. It carries out the reaction L-threonylcarbamoyladenylate + adenosine(37) in tRNA = N(6)-L-threonylcarbamoyladenosine(37) in tRNA + AMP + H(+). Its function is as follows. Required for the formation of a threonylcarbamoyl group on adenosine at position 37 (t(6)A37) in tRNAs that read codons beginning with adenine. Is probably involved in the transfer of the threonylcarbamoyl moiety of threonylcarbamoyl-AMP (TC-AMP) to the N6 group of A37. In Caldivirga maquilingensis (strain ATCC 700844 / DSM 13496 / JCM 10307 / IC-167), this protein is tRNA N6-adenosine threonylcarbamoyltransferase.